Reading from the N-terminus, the 341-residue chain is MSTDKTDVKMGVLRIYLDGAYGIGKTTAAEEFLHHFAITPNRILLIGEPLSYWRNLAGEDAICGIYGTQTRRLNGDVSPEDAQRLTAHFQSLFCSPHAIMHAKISALMDTSTSDLVQVNKEPYKIMLSDRHPIASTICFPLSRYLVGDMSPAALPGLLFTLPAEPPGTNLVVCTVSLPSHLSRVSKRARPGETVNLPFVMVLRNVYIMLINTIIFLKTNNWHAGWNTLSFCNDVFKQKLQKSECIKLREVPGIEDTLFAVLKLPELCGEFGNILPLWAWGMETLSNCLRSMSPFVLSLEQTPQHAAQELKTLLPQMTPANMSSGAWNILKELVNAVQDNTS.

Residue 19 to 26 (GAYGIGKT) coordinates ATP. Glu-48 serves as the catalytic Proton acceptor. The substrate site is built by Tyr-66 and Gln-90. ATP is bound at residue Arg-183. Position 189 (Arg-189) interacts with substrate.

It belongs to the herpesviridae thymidine kinase family. In terms of assembly, homodimer.

It carries out the reaction thymidine + ATP = dTMP + ADP + H(+). Functionally, catalyzes the transfer of the gamma-phospho group of ATP to thymidine to generate dTMP in the salvage pathway of pyrimidine synthesis. The dTMP serves as a substrate for DNA polymerase during viral DNA replication. Allows the virus to be reactivated and to grow in non-proliferative cells lacking a high concentration of phosphorylated nucleic acid precursors. The sequence is that of Thymidine kinase from Varicella-zoster virus (strain Oka vaccine) (HHV-3).